Reading from the N-terminus, the 711-residue chain is Ribosomal RNA large subunit methyltransferase K/L (711 aa).

Positions 42 to 153 (DAQRAVLWSR…KGRATISVDL (112 aa)) constitute a THUMP domain.

The protein belongs to the methyltransferase superfamily. RlmKL family.

It is found in the cytoplasm. The enzyme catalyses guanosine(2445) in 23S rRNA + S-adenosyl-L-methionine = N(2)-methylguanosine(2445) in 23S rRNA + S-adenosyl-L-homocysteine + H(+). It catalyses the reaction guanosine(2069) in 23S rRNA + S-adenosyl-L-methionine = N(2)-methylguanosine(2069) in 23S rRNA + S-adenosyl-L-homocysteine + H(+). Its function is as follows. Specifically methylates the guanine in position 2445 (m2G2445) and the guanine in position 2069 (m7G2069) of 23S rRNA. This chain is Ribosomal RNA large subunit methyltransferase K/L, found in Xanthomonas oryzae pv. oryzae (strain KACC10331 / KXO85).